A 183-amino-acid polypeptide reads, in one-letter code: Ribosome rescue factor SmrB (183 aa).

The Smr domain maps to 98–173 (LDLHGLTQLQ…GDAALLVLIE (76 aa)).

This sequence belongs to the SmrB family. Associates with collided ribosomes, but not with correctly translating polysomes.

Its function is as follows. Acts as a ribosome collision sensor. Detects stalled/collided disomes (pairs of ribosomes where the leading ribosome is stalled and a second ribosome has collided with it) and endonucleolytically cleaves mRNA at the 5' boundary of the stalled ribosome. Stalled/collided disomes form a new interface (primarily via the 30S subunits) that binds SmrB. Cleaved mRNA becomes available for tmRNA ligation, leading to ribosomal subunit dissociation and rescue of stalled ribosomes. This Escherichia fergusonii (strain ATCC 35469 / DSM 13698 / CCUG 18766 / IAM 14443 / JCM 21226 / LMG 7866 / NBRC 102419 / NCTC 12128 / CDC 0568-73) protein is Ribosome rescue factor SmrB.